The sequence spans 240 residues: tRNA (guanine-N(1)-)-methyltransferase (240 aa).

S-adenosyl-L-methionine is bound by residues Gly-110 and 129–134 (LGDFVL).

It belongs to the RNA methyltransferase TrmD family. In terms of assembly, homodimer.

Its subcellular location is the cytoplasm. The enzyme catalyses guanosine(37) in tRNA + S-adenosyl-L-methionine = N(1)-methylguanosine(37) in tRNA + S-adenosyl-L-homocysteine + H(+). In terms of biological role, specifically methylates guanosine-37 in various tRNAs. This Clostridium botulinum (strain Kyoto / Type A2) protein is tRNA (guanine-N(1)-)-methyltransferase.